A 37-amino-acid polypeptide reads, in one-letter code: Large ribosomal subunit protein bL36 (37 aa).

It belongs to the bacterial ribosomal protein bL36 family.

The protein is Large ribosomal subunit protein bL36 of Koribacter versatilis (strain Ellin345).